The chain runs to 364 residues: DNA polymerase IV (364 aa).

A UmuC domain is found at 14–198; it reads IIHIDMDAFF…LPIEKFHGVG (185 aa). Residues Asp-18 and Asp-116 each contribute to the Mg(2+) site. The active site involves Glu-117.

It belongs to the DNA polymerase type-Y family. As to quaternary structure, monomer. Mg(2+) is required as a cofactor.

The protein localises to the cytoplasm. It catalyses the reaction DNA(n) + a 2'-deoxyribonucleoside 5'-triphosphate = DNA(n+1) + diphosphate. Functionally, poorly processive, error-prone DNA polymerase involved in untargeted mutagenesis. Copies undamaged DNA at stalled replication forks, which arise in vivo from mismatched or misaligned primer ends. These misaligned primers can be extended by PolIV. Exhibits no 3'-5' exonuclease (proofreading) activity. May be involved in translesional synthesis, in conjunction with the beta clamp from PolIII. This chain is DNA polymerase IV, found in Streptococcus pyogenes serotype M12 (strain MGAS2096).